We begin with the raw amino-acid sequence, 339 residues long: Ureidoglycine carbamoyltransferase (339 aa).

It belongs to the aspartate/ornithine carbamoyltransferase superfamily. As to quaternary structure, homodimer.

It catalyses the reaction (S)-2-ureidoglycine + carbamoyl phosphate = allantoate + phosphate + H(+). It participates in purine metabolism. Its function is as follows. Catalyzes the phosphorolysis of allantoate to ureidoglycine and carbamoyl phosphate. Is likely involved in a purine degradation pathway. The sequence is that of Ureidoglycine carbamoyltransferase from Rubrobacter xylanophilus (strain DSM 9941 / JCM 11954 / NBRC 16129 / PRD-1).